The chain runs to 605 residues: Arginine--tRNA ligase (605 aa).

Positions 131 to 141 (ANPTGPMHVGH) match the 'HIGH' region motif. Positions 290–309 (PPPKSKKGQPAPAQAASNSA) are disordered. The segment covering 298–309 (QPAPAQAASNSA) has biased composition (low complexity).

This sequence belongs to the class-I aminoacyl-tRNA synthetase family. In terms of assembly, monomer.

Its subcellular location is the cytoplasm. The enzyme catalyses tRNA(Arg) + L-arginine + ATP = L-arginyl-tRNA(Arg) + AMP + diphosphate. The sequence is that of Arginine--tRNA ligase from Anaeromyxobacter sp. (strain Fw109-5).